We begin with the raw amino-acid sequence, 208 residues long: Predicted GPI-anchored protein 37 (208 aa).

The N-terminal stretch at 1–18 (MLFTQLIILLTVTSQALS) is a signal peptide. Residues 33–93 (TKRLGGGSRG…SSSSSGSRNW (61 aa)) form a disordered region. The span at 36 to 53 (LGGGSRGGSSSGSRGGSS) shows a compositional bias: gly residues. A compositionally biased stretch (low complexity) spans 54–63 (SGSSSGSSSG). Asparagine 173 is a glycosylation site (N-linked (GlcNAc...) asparagine). Residue serine 185 is the site of GPI-anchor amidated serine attachment. The propeptide at 186-208 (SSLNIPSTHFYLIGFAAAYSIVL) is removed in mature form.

Belongs to the PGA37 family.

Its subcellular location is the cell membrane. Functionally, predicted GPI-anchored protein which may have a role during host infection. In Candida albicans (strain SC5314 / ATCC MYA-2876) (Yeast), this protein is Predicted GPI-anchored protein 37 (PGA37).